Here is a 630-residue protein sequence, read N- to C-terminus: MADIDSRLDTTQATPIGVTTGPIRGSRKIHVASPTGSGIRVAMREILLEPSSGEPPVRVYDTSGPYTDPDATIDIAQGLPELRASWIRARGDVEEVAQREVRPEDNGQLGPDRSGGVPAFPNVRKKVLRAKPGANVSQMHYARRGIITPEMEYVATRENLGRERLAEYVRDGQDWGASIPDYVTPEFVRDEVARGRAIIPSNINHPESEPMAIGRNFLVKINANIGNSAVASDVAAEVDKMVWSIRWGADTVMDLSTGRNIHDTREWILRNSPVPIGTVPIYQALEKVGGIAEELTWEIFRDTLIEQAEQGVDYFTIHAGVRLPYVPLAAKRVTGIVSRGGSIMAKWCLAHHRESFLYDHFDEITEIMKAYDIAYSLGDGLRPGSIADANDEAQFAELYTLGELTRRAWAQDVQVMIEGPGHVPMHKIKENMDKQLEACGEAPFYTLGPLTTDIAPGYDHITSGIGAAMIGWYGTAMLCYVTPKEHLGLPDRDDVKVGVVTYKLAAHAADLAKGHPAAQVRDDALSKARFEFRWRDQFNLSLDPDTAEQYHDQTLPAEGAKTAHFCSMCGPKFCSMKISQEVREFAKLQNQDSAGFIAAEEAEKGMAEMSQVYEDTGRELYMGAGGREHD.

Disordered regions lie at residues 1–22 (MADIDSRLDTTQATPIGVTTGP) and 97–120 (AQREVRPEDNGQLGPDRSGGVPAF). Substrate is bound by residues N224, M253, Y282, H318, 338–340 (SRG), 379–382 (DGLR), and E418. H422 contributes to the Zn(2+) binding site. Y445 lines the substrate pocket. Position 486 (H486) interacts with Zn(2+). Positions 566, 569, and 574 each coordinate [4Fe-4S] cluster.

This sequence belongs to the ThiC family. As to quaternary structure, homodimer. [4Fe-4S] cluster serves as cofactor.

It carries out the reaction 5-amino-1-(5-phospho-beta-D-ribosyl)imidazole + S-adenosyl-L-methionine = 4-amino-2-methyl-5-(phosphooxymethyl)pyrimidine + CO + 5'-deoxyadenosine + formate + L-methionine + 3 H(+). It functions in the pathway cofactor biosynthesis; thiamine diphosphate biosynthesis. Functionally, catalyzes the synthesis of the hydroxymethylpyrimidine phosphate (HMP-P) moiety of thiamine from aminoimidazole ribotide (AIR) in a radical S-adenosyl-L-methionine (SAM)-dependent reaction. The chain is Phosphomethylpyrimidine synthase from Sphingopyxis alaskensis (strain DSM 13593 / LMG 18877 / RB2256) (Sphingomonas alaskensis).